The chain runs to 252 residues: Imidazole glycerol phosphate synthase subunit HisF (252 aa).

Residues D12 and D131 contribute to the active site.

Belongs to the HisA/HisF family. In terms of assembly, heterodimer of HisH and HisF.

The protein localises to the cytoplasm. It carries out the reaction 5-[(5-phospho-1-deoxy-D-ribulos-1-ylimino)methylamino]-1-(5-phospho-beta-D-ribosyl)imidazole-4-carboxamide + L-glutamine = D-erythro-1-(imidazol-4-yl)glycerol 3-phosphate + 5-amino-1-(5-phospho-beta-D-ribosyl)imidazole-4-carboxamide + L-glutamate + H(+). It participates in amino-acid biosynthesis; L-histidine biosynthesis; L-histidine from 5-phospho-alpha-D-ribose 1-diphosphate: step 5/9. In terms of biological role, IGPS catalyzes the conversion of PRFAR and glutamine to IGP, AICAR and glutamate. The HisF subunit catalyzes the cyclization activity that produces IGP and AICAR from PRFAR using the ammonia provided by the HisH subunit. This chain is Imidazole glycerol phosphate synthase subunit HisF, found in Thermus thermophilus (strain ATCC 27634 / DSM 579 / HB8).